A 388-amino-acid chain; its full sequence is 4-hydroxy-tetrahydrodipicolinate synthase 1, chloroplastic (388 aa).

Residues 1 to 51 (MPYLQPPRPHPHPHPTSRLSRASPPSPFPFFPAGTSRSGRLQPVPVSGHSA) form a disordered region. The transit peptide at 1–62 (MPYLQPPRPH…RVSKGKFAVA (62 aa)) directs the protein to the chloroplast. Threonine 131 contributes to the pyruvate binding site. Tyrosine 217 functions as the Proton donor/acceptor in the catalytic mechanism. Lysine 245 functions as the Schiff-base intermediate with substrate in the catalytic mechanism. Isoleucine 284 contacts pyruvate.

This sequence belongs to the DapA family. As to quaternary structure, tetramer of modified subunits derived from two genes in different combinations.

Its subcellular location is the plastid. It localises to the chloroplast. The catalysed reaction is L-aspartate 4-semialdehyde + pyruvate = (2S,4S)-4-hydroxy-2,3,4,5-tetrahydrodipicolinate + H2O + H(+). It functions in the pathway amino-acid biosynthesis; L-lysine biosynthesis via DAP pathway; (S)-tetrahydrodipicolinate from L-aspartate: step 3/4. Its activity is regulated as follows. Sensitive to lysine inhibition. This inhibition increase in an allosteric manner with increasing concentration of the inhibitor. Its function is as follows. Catalyzes the condensation of (S)-aspartate-beta-semialdehyde [(S)-ASA] and pyruvate to 4-hydroxy-tetrahydrodipicolinate (HTPA). This is 4-hydroxy-tetrahydrodipicolinate synthase 1, chloroplastic from Triticum aestivum (Wheat).